A 201-amino-acid polypeptide reads, in one-letter code: uncharacterized protein (201 aa).

Residues 1–23 form the signal peptide; that stretch reads MKILYFIFVIIINILLILNHVKS. Topologically, residues 24–178 are extracellular; that stretch reads KYNTFIFENT…GNYGEDPQRN (155 aa). N-linked (GlcNAc...) asparagine glycans are attached at residues N114 and N134. Residues 122–157 are disordered; sequence TPETPSPTENAPNTSGGSSEGNHYTYKSSSSSSEHI. The segment covering 123 to 148 has biased composition (polar residues); it reads PETPSPTENAPNTSGGSSEGNHYTYK. The chain crosses the membrane as a helical span at residues 179-199; that stretch reads IGISLSSSLIFISILFLIIFI. The Cytoplasmic segment spans residues 200-201; the sequence is NN.

The protein resides in the membrane. This is an uncharacterized protein from Dictyostelium discoideum (Social amoeba).